A 61-amino-acid chain; its full sequence is Small ribosomal subunit protein uS14 (61 aa).

The Zn(2+) site is built by C24, C27, C40, and C43.

The protein belongs to the universal ribosomal protein uS14 family. Zinc-binding uS14 subfamily. As to quaternary structure, part of the 30S ribosomal subunit. Contacts proteins S3 and S10. Zn(2+) is required as a cofactor.

In terms of biological role, binds 16S rRNA, required for the assembly of 30S particles and may also be responsible for determining the conformation of the 16S rRNA at the A site. The protein is Small ribosomal subunit protein uS14 of Thermosipho africanus (strain TCF52B).